A 489-amino-acid polypeptide reads, in one-letter code: MALTKPDVDVLVVGGGLGGLSTALFLARRGARVLLVERHASTSVLPKAAGQNPRTMELFRFGGVADEILATDDIRGAQGDFTIKVVERVGGRVPAQLRESFEELVGATEQCTPMPWALAPQDRVEPVLVAHAAKHGAEIRFATELTSFQAGDDGVTARLRDLGTGAESTVSARYLVAADGPRSAIRESLGITRHGHGTLAHFMGVIFEADLTAVVPPGSTGWYYLQHPDFTGTFGPTDRPNRHTFYVRYDPERGERPEDYTPQRCTELIRLAVDAPGLVPDILDIQAWDMAAYIADRWREGPVLLVGDAAKVTPPTGGMGGNTAIGHGFDVAWKLAAVLRGEAGERLLDSYGADGSLVSRLVVDESLAIYAQRMAPHLLGSVPEERGTAQVVLGFRYRSTAVAAEDDDPEPTEDPRRPSGRPGFRAPHVWIEQDGTRRSTVELFGDCWVLLAAPEGGAWGQAAARAARIWASASTSISSAAMSPPPPAN.

Residues 17-18, Glu37, Gln121, and Leu145 contribute to the FAD site; that span reads LG. Tyr224 functions as the Proton acceptor in the catalytic mechanism. An FAD-binding site is contributed by Asp308. Gly317 is an aklavinone binding site. Residues 402–428 form a disordered region; the sequence is VAAEDDDPEPTEDPRRPSGRPGFRAPH.

The protein belongs to the PheA/TfdB FAD monooxygenase family. In terms of assembly, monomer. Requires FAD as cofactor.

The enzyme catalyses aklavinone + NADPH + O2 + H(+) = epsilon-rhodomycinone + NADP(+) + H2O. It functions in the pathway antibiotic biosynthesis; daunorubicin biosynthesis. Its pathway is antibiotic biosynthesis; carminomycin biosynthesis. The protein operates within antibiotic biosynthesis; rhodomycin biosynthesis. It participates in antibiotic biosynthesis; doxorubicin biosynthesis. Involved in the biosynthesis of the anthracyclines carminomycin, rhodomycin, daunorubicin (daunomycin) and doxorubicin (adriamycin) which are aromatic polyketide antibiotics that exhibit high cytotoxicity and are widely applied in the chemotherapy of a variety of cancers. Catalyzes the incorporation of a hydroxyl group at position C-11 of aklavinone, resulting in epsilon-rhodomycinone. This chain is Aklavinone 12-hydroxylase DnrF (dnrF), found in Streptomyces peucetius subsp. caesius.